We begin with the raw amino-acid sequence, 207 residues long: Transcriptional regulator GfcR (207 aa).

The protein belongs to the purine/pyrimidine phosphoribosyltransferase family. GfcR subfamily.

This is Transcriptional regulator GfcR from Methanocella arvoryzae (strain DSM 22066 / NBRC 105507 / MRE50).